A 418-amino-acid polypeptide reads, in one-letter code: Metal tolerance protein 1 (418 aa).

At 1 to 56 the chain is on the cytoplasmic side; it reads MDSHNSAPPQIAEVRMDISSSTSVAAGNKVCRGAACDFSDSSNSSKDARERMASMR. The helical transmembrane segment at 57–77 threads the bilayer; it reads KLIIAVILCIIFMAVEVVGGI. The Vacuolar portion of the chain corresponds to 78-89; it reads KANSLAILTDAA. Residues 90–110 form a helical membrane-spanning segment; sequence HLLSDVAAFAISLFSLWAAGW. At 111–122 the chain is on the cytoplasmic side; that stretch reads EATPQQSYGFFR. A helical membrane pass occupies residues 123 to 143; the sequence is IEILGALVSIQLIWLLAGILV. The Vacuolar segment spans residues 144–160; it reads YEAIVRLINESGEVQGS. A helical transmembrane segment spans residues 161-181; it reads LMFAVSAFGLFVNIIMAVLLG. Residues 182 to 246 are required for zinc-binding; the sequence is HDHGHGHGHG…HHPGTGHHHH (65 aa). The Cytoplasmic portion of the chain corresponds to 182–282; sequence HDHGHGHGHG…RRNINVHSAY (101 aa). The interval 186 to 248 is disordered; the sequence is HGHGHGHGHG…PGTGHHHHDA (63 aa). Residues 196 to 227 are compositionally biased toward basic and acidic residues; it reads HSHDHDHGGSDHDHHHHEDQEHGHVHHHEDGH. Basic residues predominate over residues 235-245; the sequence is LHHHPGTGHHH. The helical transmembrane segment at 283–303 threads the bilayer; the sequence is LHVLGDSIQSIGVMIGGAIIW. At 304–307 the chain is on the vacuolar side; that stretch reads YKPE. The helical transmembrane segment at 308–328 threads the bilayer; that stretch reads WKIIDLICTLIFSVIVLFTTI. Over 329–418 the chain is Cytoplasmic; it reads KMLRNILEVL…SHVTIQIERE (90 aa).

This sequence belongs to the cation diffusion facilitator (CDF) transporter (TC 2.A.4) family. SLC30A subfamily.

The protein localises to the vacuole membrane. In terms of biological role, involved in sequestration of excess zinc in the cytoplasm into vacuoles to maintain zinc homeostasis. In Oryza sativa subsp. japonica (Rice), this protein is Metal tolerance protein 1 (MTP1).